A 340-amino-acid polypeptide reads, in one-letter code: 4-dimethylallyltryptophan N-methyltransferase easF (340 aa).

Belongs to the methyltransferase superfamily. In terms of assembly, homodimer.

The catalysed reaction is 4-(3-methylbut-2-enyl)-L-tryptophan + S-adenosyl-L-methionine = 4-(3-methylbut-2-enyl)-L-abrine + S-adenosyl-L-homocysteine + H(+). The protein operates within alkaloid biosynthesis; ergot alkaloid biosynthesis. 4-dimethylallyltryptophan N-methyltransferase; part of the gene cluster that mediates the biosynthesis of fungal ergot alkaloid. DmaW catalyzes the first step of ergot alkaloid biosynthesis by condensing dimethylallyl diphosphate (DMAP) and tryptophan to form 4-dimethylallyl-L-tryptophan. The second step is catalyzed by the methyltransferase easF that methylates 4-dimethylallyl-L-tryptophan in the presence of S-adenosyl-L-methionine, resulting in the formation of 4-dimethylallyl-L-abrine. The catalase easC and the FAD-dependent oxidoreductase easE then transform 4-dimethylallyl-L-abrine to chanoclavine-I which is further oxidized by easD in the presence of NAD(+), resulting in the formation of chanoclavine-I aldehyde. Chanoclavine-I aldehyde is the precursor of ergoamides and ergopeptines in Clavicipitaceae, and clavine-type alcaloids such as fumiclavine in Trichocomaceae. However, the metabolites downstream of chanoclavine-I aldehyde in Arthrodermataceae have not been identified yet. This Trichophyton verrucosum (strain HKI 0517) protein is 4-dimethylallyltryptophan N-methyltransferase easF.